An 843-amino-acid chain; its full sequence is MPLSYPHFRKLLLLDDEAGPLEEELPRLADEDLNRRVAADLNLQLPNVSIPWTHKVGNFTGLYSSTVPAFNPNWSTPSFPDIHLHQDLISKCEQFVGPLTKNELRRLKLVMPARFYPKVTKYFPMDKGIKPYYPEHAVNHYFKTRHYLHTLWKAGILYKRESTRSASFCGSPYSWEQELQHGSTSLNDTKRHGTESLCAQSSGILSRPSAGSAIQSKFQQSRLGLQHKQGQLANGKQGRSGRLRSRVHTPTRWPAGVEPSSTRCVNNLASRSASCFHQSAVREKANPSLSTSKRHTSTGNAVELNPVPPSSVGSQGKGSVLPCWWLQFRDTEPCSDYCLSHIINLLEDWGPCYEHGQHYIRTPRTPARVTGGVFLVDKNPHNTTESRLVVDFSQFSRGTTRVSWPKFAVPNLQSLTNLLSSNLSWLSLDVSAAFYHLPLHPAAMPHLLVGSSGLSRYVARLSSTSRIHDHQHGTLQNLHNSCTRNLYVSLLLLFQTLGRKLHLYSHPIILGFRKIPMGVGLSPFLLAQFTSAICSVVRRAFPHCLAFSYMDDLVLGAKSVQHLESLYTAVTNFLLSVGIHLNTSKTKRWGYSLHFMGYVIGSWGSLPQDHIVHKIKECFRKLPVNRPIDWKVCQRIVGLLGFAAPFTQCGYPALMPLYACITAKQAFVFSPTYKAFLCKQYMNLYPVARQRPGLCQVFADATPTGWGLAIGHQRMRGTFVAPLPIHTAELLAACFARSRSGATLIGTDNSVVLSRKYTSFPWLLGCAANWILRGTSFVYVPSALNPADDPSRGRLGLYRPLLRLPFQPTTGRTSLYADSPSVPSHLPDRVHFASPLHVAWRPP.

Positions 1–177 (MPLSYPHFRK…FCGSPYSWEQ (177 aa)) are terminal protein domain (TP). Positions 178–346 (ELQHGSTSLN…YCLSHIINLL (169 aa)) are spacer. Disordered regions lie at residues 228–259 (KQGQLANGKQGRSGRLRSRVHTPTRWPAGVEP) and 283–314 (EKANPSLSTSKRHTSTGNAVELNPVPPSSVGS). Over residues 239-249 (RSGRLRSRVHT) the composition is skewed to basic residues. The segment at 347-690 (EDWGPCYEHG…YMNLYPVARQ (344 aa)) is polymerase/reverse transcriptase domain (RT). The Reverse transcriptase domain maps to 357-600 (QHYIRTPRTP…YSLHFMGYVI (244 aa)). 3 residues coordinate Mg(2+): Asp429, Asp551, and Asp552.

It belongs to the hepadnaviridae P protein family.

The catalysed reaction is DNA(n) + a 2'-deoxyribonucleoside 5'-triphosphate = DNA(n+1) + diphosphate. It catalyses the reaction Endonucleolytic cleavage to 5'-phosphomonoester.. With respect to regulation, activated by host HSP70 and HSP40 in vitro to be able to bind the epsilon loop of the pgRNA. Because deletion of the RNase H region renders the protein partly chaperone-independent, the chaperones may be needed indirectly to relieve occlusion of the RNA-binding site by this domain. Inhibited by several reverse-transcriptase inhibitors: Lamivudine, Adefovir and Entecavir. Its function is as follows. Multifunctional enzyme that converts the viral RNA genome into dsDNA in viral cytoplasmic capsids. This enzyme displays a DNA polymerase activity that can copy either DNA or RNA templates, and a ribonuclease H (RNase H) activity that cleaves the RNA strand of RNA-DNA heteroduplexes in a partially processive 3'- to 5'-endonucleasic mode. Neo-synthesized pregenomic RNA (pgRNA) are encapsidated together with the P protein, and reverse-transcribed inside the nucleocapsid. Initiation of reverse-transcription occurs first by binding the epsilon loop on the pgRNA genome, and is initiated by protein priming, thereby the 5'-end of (-)DNA is covalently linked to P protein. Partial (+)DNA is synthesized from the (-)DNA template and generates the relaxed circular DNA (RC-DNA) genome. After budding and infection, the RC-DNA migrates in the nucleus, and is converted into a plasmid-like covalently closed circular DNA (cccDNA). The activity of P protein does not seem to be necessary for cccDNA generation, and is presumably released from (+)DNA by host nuclear DNA repair machinery. In Homo sapiens (Human), this protein is Protein P.